The following is a 103-amino-acid chain: MYAVLTTGGKQYRVQEGDVLFVEKLNAEVDSTVELTEVLAVAKDGEIKVGAPVVEGAKVVAKVLAQGKAKKVVVFKYKRKKDYRRKNGHRQPYTKIVIEKIEA.

It belongs to the bacterial ribosomal protein bL21 family. Part of the 50S ribosomal subunit. Contacts protein L20.

This protein binds to 23S rRNA in the presence of protein L20. This chain is Large ribosomal subunit protein bL21, found in Clostridium perfringens (strain ATCC 13124 / DSM 756 / JCM 1290 / NCIMB 6125 / NCTC 8237 / Type A).